Consider the following 385-residue polypeptide: MQGPAVFIDAEIDDQAQELRQFLKGLGAEISEEKSTKGIEDDLHKIIGVCDVCFKDNTHSPEEIDAVLNSIVSIIVSIPLERGENLILSFCDKMTKAKETSLARVCLQSLWRLFSNLEVTSPLRYHVYYHLVQVAKQVNQVKEVFTGVEQLKAQFAQCPPSNEQMQKLYRLLHDVLKDSNSELASKVMIELLGTYTAENASYAREDAMKCIVTALADPNTFLLDPLLSLKPVRFLEGELIHDLLSVFVSEKLPSYLEFYKNHKEFVNSQGLNHEQNIKKMRLLSFMQLAESNSEMTFQQLQDELQIKEEEVEPFIIEVLKTKLVRARMDQRARKVHISSTMHRTFGRPQWQQLRDLLLSWKSNLTLVQENINTVSAAQMELAQRQ.

In terms of domain architecture, PCI spans 180–342 (NSELASKVMI…RKVHISSTMH (163 aa)).

It belongs to the eIF-3 subunit M family. Component of the eukaryotic translation initiation factor 3 (eIF-3) complex.

The protein localises to the cytoplasm. Its function is as follows. Component of the eukaryotic translation initiation factor 3 (eIF-3) complex, which is involved in protein synthesis of a specialized repertoire of mRNAs and, together with other initiation factors, stimulates binding of mRNA and methionyl-tRNAi to the 40S ribosome. The eIF-3 complex specifically targets and initiates translation of a subset of mRNAs involved in cell proliferation. The chain is Eukaryotic translation initiation factor 3 subunit M from Anopheles gambiae (African malaria mosquito).